The sequence spans 619 residues: MAKIDTTSRLTSLRGFMKERNVQVYIIPSEDSHSSEYIADCDARREHISGFTGSAGCAVVTLETAALATDGRYFNQAAAQLDSNWTLLKQGLQDVPTWQEWSAEQSSGGKNVGVDPSLISGATAKNLAEKIRKSGGAELVPIEGNLVDLVWGKERPARPSEKVIVQPDELAGESVTNKLTKLRQELEKKRSPGFLVSMLDEIAWLFNLRGNDIPFNPVFFSYAIVTPDVATLYIDDSKLDDKCRSHLSANKVEIKPYDSILDDARKLHASVSEKGKSENAAPTGNFLISNKGSWALKRALGGDSSVDEIRSPVGDAKAIKSEAELVGMRACHVRDGAALIQYFAWLEDQLVNKKATLDEVEAADKLEELRSQKSDFVGLSFPTISSTGANAAIIHYGPERGSCATIDPEAIYLCDSGAQYHDGTTDTTRTLHFGTPTEAEREAYTLVLKGHIALDQAVFPKGTTGFALDGLARQHLWKNGLDYRHGTGHGVGSFLNVHEGPIGIGTRVQFAEVALAPGNVLSNEPGYYEDGKYGIRIENIVVVKEIKTKHKFGDKPFLGFEHVTMVPYCRNLIDTKLLTSEEKEWLNAYNAKVVDKTQGYFEGDDVTLAWLKRETAQVE.

Positions 415, 426, 524, and 538 each coordinate Mn(2+).

Belongs to the peptidase M24B family. Mn(2+) is required as a cofactor.

The enzyme catalyses Release of any N-terminal amino acid, including proline, that is linked to proline, even from a dipeptide or tripeptide.. Functionally, catalyzes the removal of a penultimate prolyl residue from the N-termini of peptides. The polypeptide is Probable Xaa-Pro aminopeptidase P (AMPP) (Fusarium vanettenii (strain ATCC MYA-4622 / CBS 123669 / FGSC 9596 / NRRL 45880 / 77-13-4) (Fusarium solani subsp. pisi)).